We begin with the raw amino-acid sequence, 378 residues long: Spermidine/putrescine import ATP-binding protein PotA (378 aa).

One can recognise an ABC transporter domain in the interval 18 to 248 (VLLSGISKSF…PKNLFVAGFI (231 aa)). Position 50–57 (50–57 (GPSGCGKT)) interacts with ATP.

The protein belongs to the ABC transporter superfamily. Spermidine/putrescine importer (TC 3.A.1.11.1) family. As to quaternary structure, the complex is composed of two ATP-binding proteins (PotA), two transmembrane proteins (PotB and PotC) and a solute-binding protein (PotD).

The protein localises to the cell inner membrane. It catalyses the reaction ATP + H2O + polyamine-[polyamine-binding protein]Side 1 = ADP + phosphate + polyamineSide 2 + [polyamine-binding protein]Side 1.. Functionally, part of the ABC transporter complex PotABCD involved in spermidine/putrescine import. Responsible for energy coupling to the transport system. The chain is Spermidine/putrescine import ATP-binding protein PotA from Salmonella paratyphi A (strain ATCC 9150 / SARB42).